Consider the following 39-residue polypeptide: MDFDFRLLIVLLPILAAAGWAVFNIGVVAMQQFQKFLNK.

A helical membrane pass occupies residues 7–25 (LLIVLLPILAAAGWAVFNI).

It belongs to the PsbY family. In terms of assembly, PSII is composed of 1 copy each of membrane proteins PsbA, PsbB, PsbC, PsbD, PsbE, PsbF, PsbH, PsbI, PsbJ, PsbK, PsbL, PsbM, PsbT, PsbX, PsbY, PsbZ, Psb30/Ycf12, peripheral proteins PsbO, CyanoQ (PsbQ), PsbU, PsbV and a large number of cofactors. It forms dimeric complexes.

It is found in the cellular thylakoid membrane. Its function is as follows. Loosely associated component of the core of photosystem II (PSII), it is not always seen in crystals. PSII is a light-driven water plastoquinone oxidoreductase, using light energy to abstract electrons from H(2)O, generating a proton gradient subsequently used for ATP formation. The protein is Photosystem II reaction center protein Y of Trichodesmium erythraeum (strain IMS101).